The sequence spans 360 residues: UPF0283 membrane protein Asuc_0957 (360 aa).

Transmembrane regions (helical) follow at residues 74-94 (VIAV…QWLI), 102-122 (WIYF…LSAL), and 215-235 (AVEN…MLFL).

This sequence belongs to the UPF0283 family.

It localises to the cell inner membrane. The sequence is that of UPF0283 membrane protein Asuc_0957 from Actinobacillus succinogenes (strain ATCC 55618 / DSM 22257 / CCUG 43843 / 130Z).